The following is a 403-amino-acid chain: MIQLRQLSDVIVKDKVVLLRLDLNIPQEGGKITDNTRIVRTIPTIKYLILHGAKVVIISHLGNPKGRIELTLSLRSVVTELEALLNIKVQFCPESIGATPKNAIINMKAGEVLLLENLRFNSGEELNDATFINELGSSGDIYVNDAFSCSHRKHASICGLPTKLPSAAGFLLLSELKHLTSIFSNANKPFTVIIGGAKMSTKLDLLNSLITKADYLIVAGAMANIFLAMKRFNIGASLYKPELINVASLILKKATSTNCKIILPFDAVIQNFNSNNITILELNSSLVMQSNAKIMDIGPQTIAQIINIIKISKTVVWNGPVGAFEQTPFDYGSTYLSKAIAEKTRTGSLCSIAGGGDTISAIKKSGVIDDFSYISTGGGAFLEWLQGKTLPGVEALMQKFRYS.

Residues 22–24, arginine 37, 60–63, arginine 119, and arginine 152 each bind substrate; these read DLN and HLGN. Residues lysine 202, glutamate 325, and 355–358 contribute to the ATP site; that span reads GGDT.

It belongs to the phosphoglycerate kinase family. In terms of assembly, monomer.

The protein resides in the cytoplasm. It carries out the reaction (2R)-3-phosphoglycerate + ATP = (2R)-3-phospho-glyceroyl phosphate + ADP. It functions in the pathway carbohydrate degradation; glycolysis; pyruvate from D-glyceraldehyde 3-phosphate: step 2/5. The chain is Phosphoglycerate kinase from Orientia tsutsugamushi (strain Boryong) (Rickettsia tsutsugamushi).